The chain runs to 727 residues: Translation initiation factor IF-2, mitochondrial (727 aa).

The N-terminal 29 residues, 1–29, are a transit peptide targeting the mitochondrion; it reads MNRKILKLENLLRFHTICRQLHSLCQRRM. Residues 178–348 form the tr-type G domain; sequence PRSPVVTIMG…IALAEMLELK (171 aa). The tract at residues 187–194 is G1; it reads GHVDHGKT. GTP is bound at residue 187-194; it reads GHVDHGKT. The interval 212 to 216 is G2; that stretch reads GITQH. GTP-binding positions include 234 to 237 and 288 to 291; these read DTPG and NKCD. The segment at 234–237 is G3; that stretch reads DTPG. The interval 288 to 291 is G4; it reads NKCD. Residues 324-326 are G5; that stretch reads SAL. T688 is modified (phosphothreonine).

The protein belongs to the TRAFAC class translation factor GTPase superfamily. Classic translation factor GTPase family. IF-2 subfamily. As to quaternary structure, monomer.

The protein localises to the mitochondrion. One of the essential components for the initiation of protein synthesis. Protects formylmethionyl-tRNA from spontaneous hydrolysis and promotes its binding to the 30S ribosomal subunits. Also involved in the hydrolysis of GTP during the formation of the 70S ribosomal complex. The protein is Translation initiation factor IF-2, mitochondrial (MTIF2) of Bos taurus (Bovine).